Reading from the N-terminus, the 98-residue chain is NADH-ubiquinone oxidoreductase chain 4L (98 aa).

Transmembrane regions (helical) follow at residues 1 to 21, 29 to 49, and 61 to 81; these read MSLI…GLLM, SLLC…MMVL, and IILL…LVMI.

Belongs to the complex I subunit 4L family. Core subunit of respiratory chain NADH dehydrogenase (Complex I) which is composed of 45 different subunits.

The protein localises to the mitochondrion inner membrane. It carries out the reaction a ubiquinone + NADH + 5 H(+)(in) = a ubiquinol + NAD(+) + 4 H(+)(out). In terms of biological role, core subunit of the mitochondrial membrane respiratory chain NADH dehydrogenase (Complex I) which catalyzes electron transfer from NADH through the respiratory chain, using ubiquinone as an electron acceptor. Part of the enzyme membrane arm which is embedded in the lipid bilayer and involved in proton translocation. In Ceratotherium simum (White rhinoceros), this protein is NADH-ubiquinone oxidoreductase chain 4L (MT-ND4L).